The primary structure comprises 119 residues: Beta-2-microglobulin (119 aa).

Positions 1–20 are cleaved as a signal peptide; it reads MAPFVAIALLVLLSLSGLEA. The region spanning 25 to 114 is the Ig-like C1-type domain; it reads PKIQVYSRHP…VTFSTPKTVK (90 aa). A disulfide bond links Cys-45 and Cys-100.

Belongs to the beta-2-microglobulin family. Heterodimer of an alpha chain and a beta chain. Beta-2-microglobulin is the beta-chain of major histocompatibility complex class I molecules.

The protein localises to the secreted. Functionally, component of the class I major histocompatibility complex (MHC). Involved in the presentation of peptide antigens to the immune system. This chain is Beta-2-microglobulin (B2M), found in Cheracebus torquatus (Collared titi monkey).